The sequence spans 382 residues: Beta-1,4-galactosyltransferase 6 (382 aa).

Topologically, residues 1-15 (MSALKRMMRVSNRSL) are cytoplasmic. A helical; Signal-anchor for type II membrane protein membrane pass occupies residues 16 to 35 (IAFIFFFSLSTSCLYFIYVA). Over 36–382 (PGIANTYLFM…MPELAPVEDY (347 aa)) the chain is Lumenal. Residues Asn-71, Asn-75, Asn-83, Asn-84, Asn-99, and Asn-122 are each glycosylated (N-linked (GlcNAc...) asparagine). Cys-108 and Cys-152 form a disulfide bridge. UDP-alpha-D-galactose contacts are provided by residues 163–167 (PFRNR), 202–204 (FNR), 229–230 (VD), Tyr-258, and Trp-290. Cys-223 and Cys-242 form a disulfide bridge. Asp-230 contacts Mn(2+). 292 to 295 (GEDD) provides a ligand contact to N-acetyl-D-glucosamine. Residue Asn-307 is glycosylated (N-linked (GlcNAc...) asparagine). His-323 contributes to the Mn(2+) binding site. 323–324 (HH) serves as a coordination point for UDP-alpha-D-galactose. Arg-334 is a binding site for N-acetyl-D-glucosamine. A glycan (N-linked (GlcNAc...) asparagine) is linked at Asn-367.

Belongs to the glycosyltransferase 7 family. Mn(2+) serves as cofactor. The cofactor is Mg(2+). Requires Ca(2+) as cofactor. In terms of tissue distribution, highest expression in brain with lower levels found in lungs, heart, skeletal muscle and kidney. Lowest expression in testis, liver and spleen.

It is found in the golgi apparatus. Its subcellular location is the golgi stack membrane. It catalyses the reaction a beta-D-glucosyl-(1&lt;-&gt;1')-N-acylsphing-4-enine + UDP-alpha-D-galactose = a beta-D-Gal-(1-&gt;4)-beta-D-Glc-(1&lt;-&gt;1)-Cer(d18:1(4E)) + UDP + H(+). It functions in the pathway protein modification; protein glycosylation. Its pathway is sphingolipid metabolism. Its activity is regulated as follows. Inhibited by EDTA. Catalyzes the synthesis of lactosylceramide (LacCer) via the transfer of galactose from UDP-galactose to glucosylceramide (GlcCer). LacCer is the starting point in the biosynthesis of all gangliosides (membrane-bound glycosphingolipids) which play pivotal roles in the CNS including neuronal maturation and axonal and myelin formation. This chain is Beta-1,4-galactosyltransferase 6, found in Rattus norvegicus (Rat).